We begin with the raw amino-acid sequence, 24 residues long: Waglerin-4 (24 aa).

A disulfide bond links C11 and C15.

It belongs to the waglerin family. In terms of assembly, monomer. In terms of tissue distribution, expressed by the venom gland.

It localises to the secreted. Functionally, waglerin-2 selectively blocks the epsilon subunit of muscle nicotinic acetylcholine receptor (nAChR). Also has effects on rodent ionotropic GABA(A) receptors (GABR), since it potentiates I(GABA) in some neurons and depresses I(GABA) in others. In mice, it elicits tachypnea, ocular proptosis, rapid collapse and spasms, whereas no toxic effects on respiration and blood pressure are observed in rats. In terms of biological role, waglerin-4 selectively blocks the epsilon subunit of muscle nicotinic acetylcholine receptor. It elicits tachypnea, ocular proptosis, rapid collapse and spasms in mice. It causes death by respiratory failure. The chain is Waglerin-4 from Tropidolaemus wagleri (Wagler's pit viper).